Consider the following 276-residue polypeptide: Molybdenum storage protein subunit alpha (276 aa).

In terms of assembly, octamer consisting of 4 alpha and 4 beta chains.

The protein localises to the cytoplasm. Its function is as follows. Intracellular storage of molybdenum. Binds polyoxomolybdates. Can bind at least 90 molybdenum atoms per protein molecule. In Azotobacter vinelandii (strain DJ / ATCC BAA-1303), this protein is Molybdenum storage protein subunit alpha.